Consider the following 1518-residue polypeptide: Hormone receptor 4 (1518 aa).

Disordered stretches follow at residues 30 to 50 (RCSS…DLLA), 145 to 327 (TSST…KLSE), 380 to 587 (PSRI…QPQA), 672 to 820 (VGVG…SSVA), and 887 to 913 (SSNS…EPTD). Over residues 34 to 46 (DGESIADTSTSSP) the composition is skewed to polar residues. Composition is skewed to low complexity over residues 145–189 (TSST…SSSG) and 208–219 (SSSSAISAAAAS). The span at 238 to 260 (EGGGPAGDGSGATGGGNTSGGST) shows a compositional bias: gly residues. Residues 291–323 (STTTTTGRPTLTPTNGVLSSASAGTGISTGSSA) are compositionally biased toward low complexity. Residues 400–429 (QRERERERDRERDRERERERDRDREREREQ) show a composition bias toward basic and acidic residues. Composition is skewed to polar residues over residues 430–451 (SISS…QLSH) and 475–489 (RKSS…SQSM). 4 stretches are compositionally biased toward low complexity: residues 490-529 (QHLT…PHSL), 546-586 (HHQQ…QQPQ), 681-705 (GSVQ…QTPS), and 738-799 (GQSH…PSSS). Gly residues-rich tracts occupy residues 800-812 (SGGG…GVGG) and 892-902 (GLGGVGGGMGG). A DNA-binding region (nuclear receptor) is located at residues 918–993 (PLVCMICEDK…QGMVLQAVRE (76 aa)). 2 NR C4-type zinc fingers span residues 921 to 941 (CMIC…CEGC) and 957 to 976 (CVAD…CQYC). Disordered stretches follow at residues 1015–1101 (KHKK…AAVA), 1142–1210 (LLQA…LPPH), and 1341–1371 (KRRG…STPI). The span at 1021-1060 (QKQQQQAAQQQQQQAAAQQQHQQQQQHQQHQQHQQQQLHS) shows a compositional bias: low complexity. A compositionally biased stretch (basic residues) spans 1061-1077 (PLHHHHHQGHQSHHAQQ). Low complexity-rich tracts occupy residues 1078 to 1101 (QHHP…AAVA) and 1144 to 1193 (QAPP…HHQQ). Over residues 1194–1205 (QGGGGGGAGGGA) the composition is skewed to gly residues. The NR LBD domain maps to 1250 to 1518 (HALGMIQTLI…PFVLNSASIR (269 aa)). Over residues 1351-1368 (HGSPASTPLSTPTGTPLS) the composition is skewed to low complexity.

The protein belongs to the nuclear hormone receptor family. NR1 subfamily. In terms of tissue distribution, during L2 and L3 stages, strong constitutive expression is seen in the ring gland. Lower expression is detected in specific neurons of the central nervous system (CNS) (at protein level).

Its subcellular location is the nucleus. Functionally, coordinates growth and maturation by mediating endocrine responses to the attainment of critical weight during larval development. Plays a central role in the genetic cascades triggered by the steroid hormone ecdysone at the onset of metamorphosis, acting as both a repressor of the early ecdysone-induced regulatory genes and an inducer of the ftz-f1 midprepupal competence factor. The sequence is that of Hormone receptor 4 (Hr4) from Drosophila melanogaster (Fruit fly).